We begin with the raw amino-acid sequence, 142 residues long: Large ribosomal subunit protein uL16 (142 aa).

It belongs to the universal ribosomal protein uL16 family. Part of the 50S ribosomal subunit.

In terms of biological role, binds 23S rRNA and is also seen to make contacts with the A and possibly P site tRNAs. In Pseudothermotoga lettingae (strain ATCC BAA-301 / DSM 14385 / NBRC 107922 / TMO) (Thermotoga lettingae), this protein is Large ribosomal subunit protein uL16.